A 133-amino-acid polypeptide reads, in one-letter code: NADPH-dependent 7-cyano-7-deazaguanine reductase (133 aa).

C46 acts as the Thioimide intermediate in catalysis. D53 serves as the catalytic Proton donor. Substrate is bound by residues V68–L70 and H87–E88.

It belongs to the GTP cyclohydrolase I family. QueF type 1 subfamily.

It is found in the cytoplasm. It catalyses the reaction 7-aminomethyl-7-carbaguanine + 2 NADP(+) = 7-cyano-7-deazaguanine + 2 NADPH + 3 H(+). It participates in tRNA modification; tRNA-queuosine biosynthesis. Functionally, catalyzes the NADPH-dependent reduction of 7-cyano-7-deazaguanine (preQ0) to 7-aminomethyl-7-deazaguanine (preQ1). The sequence is that of NADPH-dependent 7-cyano-7-deazaguanine reductase from Parasynechococcus marenigrum (strain WH8102).